The primary structure comprises 152 residues: Large ribosomal subunit protein eL14 (152 aa).

Belongs to the eukaryotic ribosomal protein eL14 family.

The chain is Large ribosomal subunit protein eL14 (RPL14) from Lumbricus rubellus (Humus earthworm).